The chain runs to 479 residues: NADH oxidase (479 aa).

Residues 8–12 (GVNHA), Asp-33, Cys-43, Val-80, 111–114 (ASGA), Lys-149, and Tyr-177 contribute to the FAD site. His-11 acts as the Proton acceptor in catalysis. Cys-43 (redox-active) is an active-site residue. Residue Cys-43 is modified to Cysteine sulfinic acid (-SO2H). Residues 170-185 (VAIV…LAEA), Asp-197, and Gly-264 each bind NAD(+). FAD-binding positions include 295-305 (LNHENVYVIGG), Leu-322, Ala-323, and Thr-324. Position 353 (Ala-353) interacts with NAD(+). Phe-450 serves as a coordination point for FAD.

It belongs to the class-III pyridine nucleotide-disulfide oxidoreductase family. Requires FAD as cofactor.

The enzyme catalyses 2 NADH + O2 + 2 H(+) = 2 NAD(+) + 2 H2O. In terms of biological role, catalyzes the four-electron reduction of molecular oxygen to water. The polypeptide is NADH oxidase (nox) (Mycoplasma pneumoniae (strain ATCC 29342 / M129 / Subtype 1) (Mycoplasmoides pneumoniae)).